Reading from the N-terminus, the 318-residue chain is Ubiquitin-like domain-containing CTD phosphatase 1 (318 aa).

The 79-residue stretch at 3–81 (VSVIIKWGGQ…IMMMGTREES (79 aa)) folds into the Ubiquitin-like domain. One can recognise an FCP1 homology domain in the interval 133-294 (PRPGKRLLVL…YKLSQYLKEI (162 aa)). D143, D145, and D253 together coordinate Mg(2+).

Mg(2+) serves as cofactor.

It localises to the nucleus. It catalyses the reaction O-phospho-L-seryl-[protein] + H2O = L-seryl-[protein] + phosphate. The enzyme catalyses O-phospho-L-threonyl-[protein] + H2O = L-threonyl-[protein] + phosphate. Its function is as follows. Dephosphorylates 26S nuclear proteasomes, thereby decreasing their proteolytic activity. Recruited to the 19S regulatory particle of the 26S proteasome where it dephosphorylates 19S component psmc2 which impairs psmc2 ATPase activity and disrupts 26S proteasome assembly. Has also been reported to stimulate the proteolytic activity of the 26S proteasome. The chain is Ubiquitin-like domain-containing CTD phosphatase 1 (ublcp1) from Danio rerio (Zebrafish).